Reading from the N-terminus, the 490-residue chain is Tegument protein VP16 (490 aa).

A disordered region spans residues 12-35 (MNADGASPPPPRPAGGPKNTPAAP). 4 positions are modified to phosphoserine: S18, S353, S411, and S452. The segment at 411–490 (STAPPTDVSL…DALGIDEYGG (80 aa)) is transcriptional activation.

The protein belongs to the herpesviridae tegument protein VP16 protein family. In terms of assembly, interacts with tegument protein VP22. Interacts with gH (via C-terminus). Interacts with the virion host shutoff protein (vhs). Interacts with VP11/12. Associates with the VP16-induced complex; binding to host HCFC1 activates VP16 for association with the octamer motif-binding host protein POU2F1, to form a multiprotein-DNA complex responsible for activating transcription of the viral immediate early genes. Interacts with host P-TEFb; this interaction recruits P-TEFb to the viral alpha-gene promoters and overcomes transcriptional inhibition by ICP22 and promotes transcription of IE genes.

It localises to the virion tegument. Its subcellular location is the host nucleus. In the early stage of viral replication, acts as a transcriptional activator of immediate-early (IE) gene products (alpha-genes), which is released by invading virions. Recruits P-TEFb to the viral alpha-gene promoters and overcomes transcriptional inhibition by ICP22 to promote transcription of IE genes. VP16-induced complex represents a regulatory switch: when it is on, it promotes IE-gene expression and thus lytic infection, and when it is off, it limits IE-gene transcription favoring latent infection. Acts as a key activator of lytic infection by initiating the lytic program through the assembly of the transcriptional regulatory VP16-induced complex composed of VP16 and two cellular factors, HCFC1 and POU2F1. This complex recognizes the core motif 'TAATGARAT' in alpha-gene promoters. In the late stage of viral replication, VP16, as a tegument, is involved in viral assembly. In terms of biological role, may play a role in the aggregation of tegument proteins around nucleocapsids during virus morphogenesis. The polypeptide is Tegument protein VP16 (Human herpesvirus 1 (strain 17) (HHV-1)).